We begin with the raw amino-acid sequence, 417 residues long: Probable lysophospholipase BODYGUARD 4 (417 aa).

The N-terminal stretch at 1–49 is a signal peptide; sequence MSFPRKFGTAIHAALSFIVFFFLDLLDAILCVVYEFVDEILEENSTGCY. The N-palmitoyl cysteine moiety is linked to residue Cys50. The 110-residue stretch at 150–259 folds into the AB hydrolase-1 domain; the sequence is VIFIHGFMGS…PPYFPSSVEG (110 aa). Residue His154 is part of the active site. Catalysis depends on Ser225, which acts as the Nucleophile. Catalysis depends on charge relay system residues Asp367 and His395.

Expressed in epidermal cells.

The protein localises to the cell membrane. Its subcellular location is the secreted. It localises to the cell wall. Functionally, involved in cuticle development and morphogenesis. The sequence is that of Probable lysophospholipase BODYGUARD 4 from Arabidopsis thaliana (Mouse-ear cress).